The chain runs to 591 residues: L-fucose isomerase (591 aa).

Active-site proton acceptor residues include Glu337 and Asp361. Mn(2+) contacts are provided by Glu337, Asp361, and His528.

Belongs to the L-fucose isomerase family. As to quaternary structure, homohexamer. Requires Mn(2+) as cofactor.

It localises to the cytoplasm. It carries out the reaction L-fucose = L-fuculose. It functions in the pathway carbohydrate degradation; L-fucose degradation; L-lactaldehyde and glycerone phosphate from L-fucose: step 1/3. In terms of biological role, converts the aldose L-fucose into the corresponding ketose L-fuculose. The sequence is that of L-fucose isomerase from Salmonella heidelberg (strain SL476).